A 141-amino-acid chain; its full sequence is Hemoglobin subunit alpha-A (141 aa).

The 141-residue stretch at 1–141 (VLSGPDKTNV…VGAVLTAKYR (141 aa)) folds into the Globin domain. His58 provides a ligand contact to O2. His87 contacts heme b.

The protein belongs to the globin family. In terms of assembly, heterotetramer of two alpha chains and two beta chains. In terms of tissue distribution, red blood cells.

Its function is as follows. Involved in oxygen transport from the lung to the various peripheral tissues. The polypeptide is Hemoglobin subunit alpha-A (HBAA) (Rhea americana (Greater rhea)).